The sequence spans 413 residues: Serine hydroxymethyltransferase (413 aa).

(6S)-5,6,7,8-tetrahydrofolate-binding positions include L117 and 121–123 (GHL). K226 bears the N6-(pyridoxal phosphate)lysine mark. Residues E239 and 349 to 351 (SPF) contribute to the (6S)-5,6,7,8-tetrahydrofolate site.

The protein belongs to the SHMT family. As to quaternary structure, homodimer. Pyridoxal 5'-phosphate is required as a cofactor.

It is found in the cytoplasm. The enzyme catalyses (6R)-5,10-methylene-5,6,7,8-tetrahydrofolate + glycine + H2O = (6S)-5,6,7,8-tetrahydrofolate + L-serine. It functions in the pathway one-carbon metabolism; tetrahydrofolate interconversion. It participates in amino-acid biosynthesis; glycine biosynthesis; glycine from L-serine: step 1/1. Its function is as follows. Catalyzes the reversible interconversion of serine and glycine with tetrahydrofolate (THF) serving as the one-carbon carrier. This reaction serves as the major source of one-carbon groups required for the biosynthesis of purines, thymidylate, methionine, and other important biomolecules. Also exhibits THF-independent aldolase activity toward beta-hydroxyamino acids, producing glycine and aldehydes, via a retro-aldol mechanism. The protein is Serine hydroxymethyltransferase of Bacillus cereus (strain G9842).